A 155-amino-acid polypeptide reads, in one-letter code: 2-C-methyl-D-erythritol 2,4-cyclodiphosphate synthase (155 aa).

Residues Asp8 and His10 each coordinate a divalent metal cation. 4-CDP-2-C-methyl-D-erythritol 2-phosphate is bound by residues 8–10 and 34–35; these read DVH and HS. His42 provides a ligand contact to a divalent metal cation. Residues 56–58, 61–65, 132–135, Phe139, and Arg142 each bind 4-CDP-2-C-methyl-D-erythritol 2-phosphate; these read DIG, FPDSD, and TTEE.

This sequence belongs to the IspF family. As to quaternary structure, homotrimer. The cofactor is a divalent metal cation.

The catalysed reaction is 4-CDP-2-C-methyl-D-erythritol 2-phosphate = 2-C-methyl-D-erythritol 2,4-cyclic diphosphate + CMP. The protein operates within isoprenoid biosynthesis; isopentenyl diphosphate biosynthesis via DXP pathway; isopentenyl diphosphate from 1-deoxy-D-xylulose 5-phosphate: step 4/6. Functionally, involved in the biosynthesis of isopentenyl diphosphate (IPP) and dimethylallyl diphosphate (DMAPP), two major building blocks of isoprenoid compounds. Catalyzes the conversion of 4-diphosphocytidyl-2-C-methyl-D-erythritol 2-phosphate (CDP-ME2P) to 2-C-methyl-D-erythritol 2,4-cyclodiphosphate (ME-CPP) with a corresponding release of cytidine 5-monophosphate (CMP). This chain is 2-C-methyl-D-erythritol 2,4-cyclodiphosphate synthase, found in Clostridium acetobutylicum (strain ATCC 824 / DSM 792 / JCM 1419 / IAM 19013 / LMG 5710 / NBRC 13948 / NRRL B-527 / VKM B-1787 / 2291 / W).